The chain runs to 219 residues: Adenylate kinase (219 aa).

12 to 17 (GAGKGT) contacts ATP. An NMP region spans residues 32-61 (STGDMLRAAVKAGTPIGLQAKAVMDAGELV). AMP-binding positions include Thr-33, Arg-38, 59–61 (ELV), 87–90 (GYPR), and Gln-94. The segment at 128–165 (GRFSCARCGEGYHDRYKLPKVADICDVCGSKEFKRRPD) is LID. Arg-129 is a binding site for ATP. Positions 132, 135, 152, and 155 each coordinate Zn(2+). AMP-binding residues include Arg-162 and Arg-174. Ala-202 is an ATP binding site.

The protein belongs to the adenylate kinase family. As to quaternary structure, monomer.

It is found in the cytoplasm. The enzyme catalyses AMP + ATP = 2 ADP. Its pathway is purine metabolism; AMP biosynthesis via salvage pathway; AMP from ADP: step 1/1. Its function is as follows. Catalyzes the reversible transfer of the terminal phosphate group between ATP and AMP. Plays an important role in cellular energy homeostasis and in adenine nucleotide metabolism. This is Adenylate kinase from Sphingopyxis alaskensis (strain DSM 13593 / LMG 18877 / RB2256) (Sphingomonas alaskensis).